Consider the following 119-residue polypeptide: NADH dehydrogenase [ubiquinone] 1 subunit C2 (119 aa).

The helical transmembrane segment at 56–75 threads the bilayer; sequence GLHRQLLYITAFFFAGYYLV.

It belongs to the complex I NDUFC2 subunit family. As to quaternary structure, complex I is composed of 45 different subunits. Interacts with TMEM242.

The protein localises to the mitochondrion inner membrane. In terms of biological role, accessory subunit of the mitochondrial membrane respiratory chain NADH dehydrogenase (Complex I), that is believed not to be involved in catalysis but required for the complex assembly. Complex I functions in the transfer of electrons from NADH to the respiratory chain. The immediate electron acceptor for the enzyme is believed to be ubiquinone. This chain is NADH dehydrogenase [ubiquinone] 1 subunit C2, found in Pongo pygmaeus (Bornean orangutan).